We begin with the raw amino-acid sequence, 328 residues long: MNDQWYKHLIGARTIKTGIAIFLTAVFCMALDLTPIYAILTAVVTIEPTAKASLIKGYRRLPATVIGAGFAVLFTYLFGDQSPFTYALSATFTILFCTKLKLQVGTNVAVLTSLAMIPGIHDAYIFNFLSRTLTAIIGLVTSGLINFMVFPPKYYGQVEEKLSKTDALMYKLFYNRCQELILSRLQSDKSEKAYKNIFNLNNQVETLISYQRDELSYHKKKECDWKLLNQLTKRAYTNRLFITHLSNIIYLPKNTRVNFSGDEKMALLKISSSIKDIFYDGTFKREDDSVETLRSTIKALEISGENQIKSHILYEVLMIYRLLDSRYA.

A run of 4 helical transmembrane segments spans residues 19–39 (IAIF…IYAI), 61–81 (LPAT…FGDQ), 108–128 (VAVL…IFNF), and 132–152 (TLTA…VFPP).

It belongs to the UPF0421 family.

The protein localises to the cell membrane. The chain is UPF0421 protein SAV1889 from Staphylococcus aureus (strain Mu50 / ATCC 700699).